The primary structure comprises 54 residues: Lectin alpha chain (54 aa).

Belongs to the leguminous lectin family. Tetramer of two alpha and two beta chains.

This chain is Lectin alpha chain, found in Lathyrus odoratus (Sweet pea).